Consider the following 1820-residue polypeptide: uncharacterized protein (1820 aa).

Disordered regions lie at residues 1-73 (MQWT…TLSG), 86-158 (TTTT…VRSA), 226-260 (GSSG…NNNY), 286-366 (EERA…QETE), 453-497 (DVQD…RNLS), 519-548 (LSSI…TDTA), 577-597 (GNSS…PPTP), 619-689 (GAGT…TASG), and 735-830 (HSHN…TPSS). The segment covering 20 to 31 (NRNSIEQRTPAN) has biased composition (polar residues). The span at 86 to 128 (TTTTTIIESSSSTNTTLEKNSPSPAGGSCSSGSGSLSPAYLQH) shows a compositional bias: low complexity. The span at 129–146 (HLQHHGSPLHHLQVHHHT) shows a compositional bias: basic residues. The span at 247–259 (SNSSNCSSQFNNN) shows a compositional bias: low complexity. A coiled-coil region spans residues 265–308 (VDSLDDMLRKLTELEQRVIEAEERAEEAEDKVRAMEQRLSEWPK). A compositionally biased stretch (basic and acidic residues) spans 294–305 (DKVRAMEQRLSE). The span at 346-358 (ASGGATAGAAGSG) shows a compositional bias: low complexity. The stretch at 362-438 (TQETEKTITS…LKNHIANQSQ (77 aa)) forms a coiled coil. Residues 453–463 (DVQDFTGSGSN) are compositionally biased toward polar residues. Serine 542 and serine 543 each carry phosphoserine. Residues 623 to 632 (GTSTAESTAS) show a composition bias toward low complexity. The segment covering 655–669 (HGSGTGIGTGDGHGT) has biased composition (gly residues). Over residues 738–769 (NSSSTDNTETSTSGSASSPSKSLKTSSSLSPA) the composition is skewed to low complexity. Positions 787–818 (QSRTSTTPSSRINQHLQPSQHQHHTLSNQNHG) are enriched in polar residues. PH domains follow at residues 909–1003 (SLEK…NVQR) and 1017–1124 (KPTV…VVSG). Serine 1073, serine 1075, and serine 1077 each carry phosphoserine. The MyTH4 domain occupies 1159 to 1378 (HTKDTITAPL…PSRMEVLSIL (220 aa)). An FERM domain is found at 1389–1712 (HAIPVHMMNS…DYMNALGHTV (324 aa)). 2 disordered regions span residues 1713–1748 (PGTP…ATGF) and 1764–1820 (ATHT…QRIK). Residues 1714-1724 (GTPQMNSLTRN) show a composition bias toward polar residues. Positions 1764–1781 (ATHTLNSNHSHTLSSSHH) are enriched in low complexity. Positions 1805 to 1820 (HQPDILKSTPDHQRIK) are enriched in basic and acidic residues.

This is an uncharacterized protein from Drosophila melanogaster (Fruit fly).